Consider the following 487-residue polypeptide: Homoserine O-acetyltransferase (487 aa).

One can recognise an AB hydrolase-1 domain in the interval 45–352 (NVILVCHPLT…PHGHDGFLLE (308 aa)). Serine 150 functions as the Nucleophile in the catalytic mechanism. Arginine 219 is a binding site for substrate. Residues aspartate 313 and histidine 346 contribute to the active site. Residue aspartate 347 participates in substrate binding. CBS domains lie at 373–430 (MTNN…FQDL) and 434–487 (MTKD…EVLQ).

Belongs to the AB hydrolase superfamily. MetX family. In terms of assembly, homodimer.

Its subcellular location is the cytoplasm. The enzyme catalyses L-homoserine + acetyl-CoA = O-acetyl-L-homoserine + CoA. It participates in amino-acid biosynthesis; L-methionine biosynthesis via de novo pathway; O-acetyl-L-homoserine from L-homoserine: step 1/1. Functionally, transfers an acetyl group from acetyl-CoA to L-homoserine, forming acetyl-L-homoserine. In Methanocorpusculum labreanum (strain ATCC 43576 / DSM 4855 / Z), this protein is Homoserine O-acetyltransferase.